A 306-amino-acid polypeptide reads, in one-letter code: tRNA pseudouridine synthase B (306 aa).

The active-site Nucleophile is the D47.

This sequence belongs to the pseudouridine synthase TruB family. Type 1 subfamily.

It catalyses the reaction uridine(55) in tRNA = pseudouridine(55) in tRNA. Functionally, responsible for synthesis of pseudouridine from uracil-55 in the psi GC loop of transfer RNAs. The protein is tRNA pseudouridine synthase B of Neisseria gonorrhoeae (strain ATCC 700825 / FA 1090).